The sequence spans 220 residues: UPF0502 protein Pnap_3223 (220 aa).

Belongs to the UPF0502 family.

The chain is UPF0502 protein Pnap_3223 from Polaromonas naphthalenivorans (strain CJ2).